Reading from the N-terminus, the 377-residue chain is Glutamate 5-kinase (377 aa).

Residue lysine 18 coordinates ATP. Substrate is bound by residues serine 55, aspartate 142, and asparagine 154. ATP-binding positions include 174–175 (SD) and 216–222 (TGGMKSK). The region spanning 281–359 (QGEVVVDAGA…REIEALLGYK (79 aa)) is the PUA domain.

The protein belongs to the glutamate 5-kinase family.

It localises to the cytoplasm. It carries out the reaction L-glutamate + ATP = L-glutamyl 5-phosphate + ADP. The protein operates within amino-acid biosynthesis; L-proline biosynthesis; L-glutamate 5-semialdehyde from L-glutamate: step 1/2. Its function is as follows. Catalyzes the transfer of a phosphate group to glutamate to form L-glutamate 5-phosphate. The protein is Glutamate 5-kinase of Meiothermus ruber.